We begin with the raw amino-acid sequence, 502 residues long: Probable cytosol aminopeptidase (502 aa).

Residues K269 and D274 each coordinate Mn(2+). Residue K281 is part of the active site. Mn(2+) contacts are provided by D292, D351, and E353. The active site involves R355.

Belongs to the peptidase M17 family. It depends on Mn(2+) as a cofactor.

It localises to the cytoplasm. It catalyses the reaction Release of an N-terminal amino acid, Xaa-|-Yaa-, in which Xaa is preferably Leu, but may be other amino acids including Pro although not Arg or Lys, and Yaa may be Pro. Amino acid amides and methyl esters are also readily hydrolyzed, but rates on arylamides are exceedingly low.. The enzyme catalyses Release of an N-terminal amino acid, preferentially leucine, but not glutamic or aspartic acids.. In terms of biological role, presumably involved in the processing and regular turnover of intracellular proteins. Catalyzes the removal of unsubstituted N-terminal amino acids from various peptides. The chain is Probable cytosol aminopeptidase from Shewanella frigidimarina (strain NCIMB 400).